The chain runs to 557 residues: CTP synthase (557 aa).

Residues 1 to 270 (MTKYVFVTGG…DAIICEELKL (270 aa)) form an amidoligase domain region. Ser13 provides a ligand contact to CTP. Ser13 serves as a coordination point for UTP. Residues 14 to 19 (SLGKGI) and Asp71 contribute to the ATP site. Mg(2+)-binding residues include Asp71 and Glu144. Residues 151–153 (DIE), 191–196 (KTKPTQ), and Lys227 each bind CTP. Residues 191 to 196 (KTKPTQ) and Lys227 contribute to the UTP site. The region spanning 295–547 (TIGMVGKYVD…VEAALAHHEA (253 aa)) is the Glutamine amidotransferase type-1 domain. Gly356 serves as a coordination point for L-glutamine. Catalysis depends on Cys383, which acts as the Nucleophile; for glutamine hydrolysis. L-glutamine-binding positions include 384–387 (LGMQ), Glu407, and Arg473. Residues His520 and Glu522 contribute to the active site.

This sequence belongs to the CTP synthase family. As to quaternary structure, homotetramer.

The catalysed reaction is UTP + L-glutamine + ATP + H2O = CTP + L-glutamate + ADP + phosphate + 2 H(+). It carries out the reaction L-glutamine + H2O = L-glutamate + NH4(+). It catalyses the reaction UTP + NH4(+) + ATP = CTP + ADP + phosphate + 2 H(+). It functions in the pathway pyrimidine metabolism; CTP biosynthesis via de novo pathway; CTP from UDP: step 2/2. With respect to regulation, allosterically activated by GTP, when glutamine is the substrate; GTP has no effect on the reaction when ammonia is the substrate. The allosteric effector GTP functions by stabilizing the protein conformation that binds the tetrahedral intermediate(s) formed during glutamine hydrolysis. Inhibited by the product CTP, via allosteric rather than competitive inhibition. Catalyzes the ATP-dependent amination of UTP to CTP with either L-glutamine or ammonia as the source of nitrogen. Regulates intracellular CTP levels through interactions with the four ribonucleotide triphosphates. The protein is CTP synthase of Paraburkholderia phytofirmans (strain DSM 17436 / LMG 22146 / PsJN) (Burkholderia phytofirmans).